A 635-amino-acid chain; its full sequence is Glutamine--fructose-6-phosphate aminotransferase [isomerizing] (635 aa).

C2 acts as the Nucleophile; for GATase activity in catalysis. Positions C2–D218 constitute a Glutamine amidotransferase type-2 domain. 2 consecutive SIS domains span residues F299 to I439 and C472 to P625. K630 acts as the For Fru-6P isomerization activity in catalysis.

In terms of assembly, homodimer.

It is found in the cytoplasm. It carries out the reaction D-fructose 6-phosphate + L-glutamine = D-glucosamine 6-phosphate + L-glutamate. Catalyzes the first step in hexosamine metabolism, converting fructose-6P into glucosamine-6P using glutamine as a nitrogen source. This is Glutamine--fructose-6-phosphate aminotransferase [isomerizing] from Treponema pallidum (strain Nichols).